The following is a 250-amino-acid chain: Coproheme decarboxylase (250 aa).

Fe-coproporphyrin III is bound by residues Arg-131, 145 to 149, His-172, and Gln-185; that span reads YPMNK. Residue Tyr-145 is part of the active site.

It belongs to the ChdC family. Type 1 subfamily. The cofactor is Fe-coproporphyrin III.

The enzyme catalyses Fe-coproporphyrin III + 2 H2O2 + 2 H(+) = heme b + 2 CO2 + 4 H2O. It carries out the reaction Fe-coproporphyrin III + H2O2 + H(+) = harderoheme III + CO2 + 2 H2O. The catalysed reaction is harderoheme III + H2O2 + H(+) = heme b + CO2 + 2 H2O. It functions in the pathway porphyrin-containing compound metabolism; protoheme biosynthesis. Functionally, involved in coproporphyrin-dependent heme b biosynthesis. Catalyzes the decarboxylation of Fe-coproporphyrin III (coproheme) to heme b (protoheme IX), the last step of the pathway. The reaction occurs in a stepwise manner with a three-propionate intermediate. The sequence is that of Coproheme decarboxylase from Staphylococcus aureus (strain USA300 / TCH1516).